An 820-amino-acid polypeptide reads, in one-letter code: G-type lectin S-receptor-like serine/threonine-protein kinase At1g11300 (820 aa).

An N-terminal signal peptide occupies residues 1-26 (MRLHESSSPFVCILVLSCFFLSVSLA). The Bulb-type lectin domain occupies 27–150 (QERAFFSGKL…SSDAYLWESF (124 aa)). Topologically, residues 27–436 (QERAFFSGKL…SEIKTKDKRP (410 aa)) are extracellular. N-linked (GlcNAc...) asparagine glycosylation is found at N37, N58, N87, N115, N123, N173, N211, N247, N256, and N282. The EGF-like; atypical domain maps to 290 to 326 (PATECDNYRRCGEFATCNPRKNPLCSCIRGFRPRNLI). Intrachain disulfides connect C294–C306 and C300–C314. 2 N-linked (GlcNAc...) asparagine glycosylation sites follow: N332 and N351. Positions 345-425 (CERQNNNGSA…SGLDLYIRLA (81 aa)) constitute a PAN domain. Intrachain disulfides connect C379-C400 and C383-C389. An N-linked (GlcNAc...) asparagine glycan is attached at N404. A helical transmembrane segment spans residues 437 to 457 (ILIGTILAGGIFVVAACVLLA). The Cytoplasmic portion of the chain corresponds to 458–820 (RRIVMKKRAK…NVTITDVTGR (363 aa)). The region spanning 509–788 (FSLRNKLGQG…DIPEPKQPAF (280 aa)) is the Protein kinase domain. ATP is bound by residues 515-523 (LGQGGFGPV) and K537. Residues 598–615 (RRAKLLDWKTRFNIINGI) are caM-binding. The active-site Proton acceptor is the D634.

It belongs to the protein kinase superfamily. Ser/Thr protein kinase family.

It localises to the cell membrane. The catalysed reaction is L-seryl-[protein] + ATP = O-phospho-L-seryl-[protein] + ADP + H(+). The enzyme catalyses L-threonyl-[protein] + ATP = O-phospho-L-threonyl-[protein] + ADP + H(+). The protein is G-type lectin S-receptor-like serine/threonine-protein kinase At1g11300 of Arabidopsis thaliana (Mouse-ear cress).